The following is a 56-amino-acid chain: Large ribosomal subunit protein bL33 (56 aa).

Belongs to the bacterial ribosomal protein bL33 family.

The sequence is that of Large ribosomal subunit protein bL33 from Aliarcobacter butzleri (strain RM4018) (Arcobacter butzleri).